The chain runs to 359 residues: MPLSRLIINDFRNITTCDIQLSPGFNFVIGPNGSGKTSVLEAIYLLGHGRSFKSSLTGRIIRNDCDELFIHGRFTTPELFELPIGINKQRDGTTEVKIGGESGQKLAQLAKVLPLQLIHPEGFELVTDGPKFRRAFIDWGVFHVEPAFYDAWSRVKRLTKQRNALLKTANSYRELSYWDLELAQLSEKIDQWRVDYINHISEATQQICQAFLPEYDIKLSYYRGWDRETPYAELLKKNFERDKQLGYTVGGPNKADLRIKVAGTPVEDVLSRGQLKLMVCALRLAQGQHLTEATGKQCIYLIDDFASELDSHRRQLLAQYLKQTKAQVFISSITAEQIADMHDDESKMFEIEHGKIAQG.

30–37 (GPNGSGKT) is an ATP binding site.

It belongs to the RecF family.

The protein localises to the cytoplasm. Its function is as follows. The RecF protein is involved in DNA metabolism; it is required for DNA replication and normal SOS inducibility. RecF binds preferentially to single-stranded, linear DNA. It also seems to bind ATP. This chain is DNA replication and repair protein RecF, found in Aliivibrio fischeri (strain MJ11) (Vibrio fischeri).